A 20-amino-acid chain; its full sequence is MLLHRLSKFCKIERDIVYIS.

In terms of tissue distribution, lateral root initiations.

In terms of biological role, regulatory peptide encoded by the primary transcript (pri-miR171b) of the microRNA miR171b that enhances the accumulation of its corresponding mature miRNA. Acts probably as a transcriptional activator of its corresponding pri-miRNA. Has no effect on the accumulation of other miRNAs. Addition of synthetic miPEP171b increases the abundance of miR171b, with consequent reduction of lateral root formation. The polypeptide is Peptide encoded by miPEP171b (Medicago truncatula (Barrel medic)).